Consider the following 309-residue polypeptide: Glutaminase 2 (309 aa).

Substrate is bound by residues S65, N117, E162, N169, Y193, Y245, and V263.

Belongs to the glutaminase family. Homotetramer.

The enzyme catalyses L-glutamine + H2O = L-glutamate + NH4(+). The chain is Glutaminase 2 from Bacillus subtilis (strain 168).